We begin with the raw amino-acid sequence, 141 residues long: MMTERTFSIIKPDVVKRNLIGAILTRFEQNGFKIIASKMVRLTREQAEGFYAEHQGKEFFVPLVEYMMSSPIVVSVLEKENAVKDYRTLIGTTNPETAAEGTIRKDFALSQRENSVHGSDSIESANREIAYFFTNSEIFER.

6 residues coordinate ATP: K11, F59, R87, T93, R104, and N114. H117 functions as the Pros-phosphohistidine intermediate in the catalytic mechanism.

It belongs to the NDK family. Homotetramer. Mg(2+) is required as a cofactor.

The protein resides in the cytoplasm. The catalysed reaction is a 2'-deoxyribonucleoside 5'-diphosphate + ATP = a 2'-deoxyribonucleoside 5'-triphosphate + ADP. It carries out the reaction a ribonucleoside 5'-diphosphate + ATP = a ribonucleoside 5'-triphosphate + ADP. Functionally, major role in the synthesis of nucleoside triphosphates other than ATP. The ATP gamma phosphate is transferred to the NDP beta phosphate via a ping-pong mechanism, using a phosphorylated active-site intermediate. The sequence is that of Nucleoside diphosphate kinase from Haemophilus influenzae (strain ATCC 51907 / DSM 11121 / KW20 / Rd).